The sequence spans 252 residues: RNA-binding protein 7 (252 aa).

The RRM domain occupies 9–86 (RTLFVGNLDP…RQLNIKFKTG (78 aa)). Polar residues-rich tracts occupy residues 88–107 (SHIN…SPAN) and 119–137 (QMGS…PFSS). Disordered regions lie at residues 88–137 (SHIN…PFSS) and 171–252 (QLRG…WKHF). Composition is skewed to basic and acidic residues over residues 211–230 (ERNR…DRSG) and 237–252 (PPDR…WKHF).

Component of the nuclear exosome targeting (NEXT) complex composed of MTREX, ZCCHC8, and RBM7 that directs a subset of non-coding short-lived RNAs for exosomal degradation.

The protein resides in the nucleus. Its subcellular location is the nucleoplasm. Its function is as follows. RNA-binding subunit of the trimeric nuclear exosome targeting (NEXT) complex, a complex that functions as an RNA exosome cofactor that directs a subset of non-coding short-lived RNAs for exosomal degradation. NEXT is involved in surveillance and turnover of aberrant transcripts and non-coding RNAs. Binds preferentially polyuridine sequences and associates with newly synthesized RNAs, including pre-mRNAs and short-lived exosome substrates such as promoter upstream transcripts (PROMPTs), enhancer RNAs (eRNAs), and 3'-extended products from small nuclear RNAs (snRNAs). The polypeptide is RNA-binding protein 7 (Danio rerio (Zebrafish)).